A 284-amino-acid polypeptide reads, in one-letter code: NH(3)-dependent NAD(+) synthetase (284 aa).

An ATP-binding site is contributed by 51-58 (GISGGIDS). Asp57 serves as a coordination point for Mg(2+). Arg148 contributes to the deamido-NAD(+) binding site. An ATP-binding site is contributed by Thr168. Residue Glu173 participates in Mg(2+) binding. Deamido-NAD(+) contacts are provided by Lys181 and Asp188. Residues Lys197 and Thr219 each contribute to the ATP site. 268 to 269 (HK) contributes to the deamido-NAD(+) binding site.

It belongs to the NAD synthetase family. As to quaternary structure, homodimer.

The catalysed reaction is deamido-NAD(+) + NH4(+) + ATP = AMP + diphosphate + NAD(+) + H(+). It participates in cofactor biosynthesis; NAD(+) biosynthesis; NAD(+) from deamido-NAD(+) (ammonia route): step 1/1. Functionally, catalyzes the ATP-dependent amidation of deamido-NAD to form NAD. Uses ammonia as a nitrogen source. The sequence is that of NH(3)-dependent NAD(+) synthetase from Burkholderia pseudomallei (strain 1106a).